A 228-amino-acid polypeptide reads, in one-letter code: Ribose-5-phosphate isomerase A (228 aa).

Residues 32-35, 85-88, and 98-101 each bind substrate; these read TGST, DGAD, and KGGG. E107 acts as the Proton acceptor in catalysis. K125 provides a ligand contact to substrate.

This sequence belongs to the ribose 5-phosphate isomerase family. As to quaternary structure, homodimer.

It carries out the reaction aldehydo-D-ribose 5-phosphate = D-ribulose 5-phosphate. It functions in the pathway carbohydrate degradation; pentose phosphate pathway; D-ribose 5-phosphate from D-ribulose 5-phosphate (non-oxidative stage): step 1/1. Functionally, catalyzes the reversible conversion of ribose-5-phosphate to ribulose 5-phosphate. The polypeptide is Ribose-5-phosphate isomerase A (Ralstonia pickettii (strain 12J)).